Here is a 160-residue protein sequence, read N- to C-terminus: Ribosomal RNA large subunit methyltransferase H (160 aa).

L76 and G108 together coordinate S-adenosyl-L-methionine.

It belongs to the RNA methyltransferase RlmH family. As to quaternary structure, homodimer.

Its subcellular location is the cytoplasm. The catalysed reaction is pseudouridine(1915) in 23S rRNA + S-adenosyl-L-methionine = N(3)-methylpseudouridine(1915) in 23S rRNA + S-adenosyl-L-homocysteine + H(+). Specifically methylates the pseudouridine at position 1915 (m3Psi1915) in 23S rRNA. This is Ribosomal RNA large subunit methyltransferase H from Afipia carboxidovorans (strain ATCC 49405 / DSM 1227 / KCTC 32145 / OM5) (Oligotropha carboxidovorans).